A 192-amino-acid polypeptide reads, in one-letter code: MAP6 domain-containing protein 1 (192 aa).

Residues Cys5, Cys10, and Cys11 are each lipidated (S-palmitoyl cysteine). A disordered region spans residues 36 to 106 (LESEEPIPGG…RTKPSATPGR (71 aa)). A Phosphoserine modification is found at Ser38. The span at 43–58 (PGGVPSRRGPSPAGSR) shows a compositional bias: low complexity. Mn regions lie at residues 123–136 (TTSY…WTGV) and 158–170 (DGSP…APEV). Phosphoserine is present on Ser160.

Belongs to the STOP family. In terms of assembly, interacts with calmodulin. Palmitoylated. Palmitoylation enhances association with microtubules.

The protein resides in the golgi apparatus. It is found in the cytoplasm. It localises to the cytoskeleton. Its function is as follows. May have microtubule-stabilizing activity. The chain is MAP6 domain-containing protein 1 (MAP6D1) from Bos taurus (Bovine).